The sequence spans 384 residues: Putative ankyrin repeat protein L72 (384 aa).

ANK repeat units follow at residues 88-117, 119-146, 171-200, 202-231, 233-261, 298-324, and 325-357; these read ADMC…NIKN, GNLL…KEFS, DHNV…ILSV, DDSL…DIES, NNYC…NPNN, ILYQ…AGIK, and PTNS…DINV.

This is Putative ankyrin repeat protein L72 from Acanthamoeba polyphaga (Amoeba).